Consider the following 54-residue polypeptide: Ferredoxin (54 aa).

4Fe-4S ferredoxin-type domains lie at 2–28 and 29–54; these read HVIS…EGET and KYVV…ISAE. [4Fe-4S] cluster-binding residues include C8, C11, C14, C18, C36, C39, C42, and C46.

Requires [4Fe-4S] cluster as cofactor.

Ferredoxins are iron-sulfur proteins that transfer electrons in a wide variety of metabolic reactions. This Megasphaera elsdenii protein is Ferredoxin.